The following is a 287-amino-acid chain: Zinc transporter ZIP9 (287 aa).

A helical transmembrane segment spans residues 4–24 (FLSISLLSLAMLVGCYVAGII). N-linked (GlcNAc...) asparagine glycosylation is present at Asn-29. 5 consecutive transmembrane segments (helical) span residues 35-55 (LKLV…AVIV), 107-127 (AYIG…DQIG), 147-167 (ITTT…LGAA), 177-197 (LIVF…LVSF), and 211-231 (HLLV…LGLS). The N-linked (GlcNAc...) asparagine glycan is linked to Asn-242. The chain crosses the membrane as a helical span at residues 245-265 (GVAMLFSAGTFLYVATVHVLP). Residues 268–287 (TSTNQSGSSLSPRPLPSGKN) are disordered. Asn-271 carries an N-linked (GlcNAc...) asparagine glycan. Over residues 273-287 (SGSSLSPRPLPSGKN) the composition is skewed to low complexity.

The protein belongs to the ZIP transporter (TC 2.A.5) family.

It localises to the golgi apparatus. It is found in the trans-Golgi network membrane. Its subcellular location is the cell membrane. The protein resides in the cytoplasm. The protein localises to the perinuclear region. It localises to the mitochondrion. It is found in the nucleus. It catalyses the reaction Zn(2+)(in) = Zn(2+)(out). Transports zinc ions across cell and organelle membranes into the cytoplasm and regulates intracellular zinc homeostasis. Participates in the zinc ions efflux out of the secretory compartments. Regulates intracellular zinc level, resulting in the enhancement of AKT1 and MAPK3/MAPK1 (Erk1/2) phosphorylation in response to the BCR activation. Also functions as a membrane androgen receptor that mediates, through a G protein, the non-classical androgen signaling pathway, characterized by the activation of MAPK3/MAPK1 (Erk1/2) and transcription factors CREB1 or ATF1. This pathway contributes to CLDN1 and CLDN5 expression and tight junction formation between adjacent Sertoli cells. Mediates androgen-induced vascular endothelial cell proliferation through activation of an inhibitory G protein leading to the AKT1 and MAPK3/MAPK1 (Erk1/2) activation which in turn modulate inhibition (phosphorylation) of GSK3B and CCND1 transcription. Moreover, has dual functions as a membrane-bound androgen receptor and as an androgen-dependent zinc transporter both of which are mediated through an inhibitory G protein (Gi) that mediates both MAP kinase and zinc signaling leading to the androgen-dependent apoptotic process. This is Zinc transporter ZIP9 from Rattus norvegicus (Rat).